The chain runs to 471 residues: MSAPFIFKRFSSTIPIHSKPTPSKAHLHFPLPSSSFPKGYVLTGIHAGVKKVAGVPDLAVILSTSSQPTSAAACFTRNAFKAAPVIVSNEILKKNGGYARGVVVNSGCANAVTGKQGMEDAWAMVRETDALLPSKKFEHETLVMSTGVIGQNLPISKIVEGIRSQAESSSTRSLASDFSAWERAAKAFMTTDTFPKLRSRTFTIDGVEYKLAGMDKGAGMIHPDMGPAGTEFKKQLHATLLGCILTDAAVSPRSLQSALTYAVDRSFNSISVDGDMSTNDSIYVLANGAASSSIIDEDATPQAYEAFKQELTTFAADLAKLVVRDGEGATKFVTVTVKGAPSYKDAHSIASRISTSALVKTALYGEDANWGRILAATGSVPLSPTNANTPPPVIDTTKVCVTIVPADGTAPLPVLVNGEPENVDEDRAKEIMTQEDFELLVDLGGMGDGEAQYWTCDFSYEYVRINGDYRS.

Substrate is bound by residues Thr190, Lys216, Thr239, Glu327, Asn466, and Ser471. Thr239 (nucleophile) is an active-site residue.

The protein belongs to the ArgJ family. In terms of assembly, heterodimer of an alpha and a beta chain. In terms of processing, the alpha and beta chains are autoproteolytically processed from a single precursor protein within the mitochondrion.

It is found in the mitochondrion matrix. It catalyses the reaction N(2)-acetyl-L-ornithine + L-glutamate = N-acetyl-L-glutamate + L-ornithine. It carries out the reaction L-glutamate + acetyl-CoA = N-acetyl-L-glutamate + CoA + H(+). It participates in amino-acid biosynthesis; L-arginine biosynthesis; L-ornithine and N-acetyl-L-glutamate from L-glutamate and N(2)-acetyl-L-ornithine (cyclic): step 1/1. It functions in the pathway amino-acid biosynthesis; L-arginine biosynthesis; N(2)-acetyl-L-ornithine from L-glutamate: step 1/4. Its function is as follows. Catalyzes two activities which are involved in the cyclic version of arginine biosynthesis: the synthesis of acetylglutamate from glutamate and acetyl-CoA, and of ornithine by transacetylation between acetylornithine and glutamate. This chain is Arginine biosynthesis bifunctional protein ArgJ, mitochondrial, found in Coprinopsis cinerea (strain Okayama-7 / 130 / ATCC MYA-4618 / FGSC 9003) (Inky cap fungus).